Here is a 396-residue protein sequence, read N- to C-terminus: Cytochrome P450 121 (396 aa).

Residue C345 participates in heme binding.

It belongs to the cytochrome P450 family. Requires heme as cofactor.

It localises to the cytoplasm. This is Cytochrome P450 121 (cyp121) from Mycobacterium bovis (strain ATCC BAA-935 / AF2122/97).